The chain runs to 177 residues: Large ribosomal subunit protein uL6 (177 aa).

This sequence belongs to the universal ribosomal protein uL6 family. As to quaternary structure, part of the 50S ribosomal subunit.

Its function is as follows. This protein binds to the 23S rRNA, and is important in its secondary structure. It is located near the subunit interface in the base of the L7/L12 stalk, and near the tRNA binding site of the peptidyltransferase center. In Bordetella petrii (strain ATCC BAA-461 / DSM 12804 / CCUG 43448), this protein is Large ribosomal subunit protein uL6.